The following is a 379-amino-acid chain: Anhydro-N-acetylmuramic acid kinase (379 aa).

9–16 contributes to the ATP binding site; sequence GTSADGVD.

It belongs to the anhydro-N-acetylmuramic acid kinase family.

It catalyses the reaction 1,6-anhydro-N-acetyl-beta-muramate + ATP + H2O = N-acetyl-D-muramate 6-phosphate + ADP + H(+). The protein operates within amino-sugar metabolism; 1,6-anhydro-N-acetylmuramate degradation. It functions in the pathway cell wall biogenesis; peptidoglycan recycling. Functionally, catalyzes the specific phosphorylation of 1,6-anhydro-N-acetylmuramic acid (anhMurNAc) with the simultaneous cleavage of the 1,6-anhydro ring, generating MurNAc-6-P. Is required for the utilization of anhMurNAc either imported from the medium or derived from its own cell wall murein, and thus plays a role in cell wall recycling. This Synechococcus sp. (strain CC9605) protein is Anhydro-N-acetylmuramic acid kinase.